Here is a 335-residue protein sequence, read N- to C-terminus: Large ribosomal subunit protein uL10 (335 aa).

The segment at 300 to 335 is disordered; it reads QVSEQAAEKKEEKKEEEKKGPSEEEIGGGLSSLFGG. Residues 305-321 show a composition bias toward basic and acidic residues; sequence AAEKKEEKKEEEKKGPS. The segment covering 326–335 has biased composition (gly residues); the sequence is GGGLSSLFGG.

This sequence belongs to the universal ribosomal protein uL10 family. As to quaternary structure, part of the 50S ribosomal subunit. Forms part of the ribosomal stalk which helps the ribosome interact with GTP-bound translation factors. Forms a heptameric L10(L12)2(L12)2(L12)2 complex, where L10 forms an elongated spine to which the L12 dimers bind in a sequential fashion.

Forms part of the ribosomal stalk, playing a central role in the interaction of the ribosome with GTP-bound translation factors. In Sulfolobus acidocaldarius (strain ATCC 33909 / DSM 639 / JCM 8929 / NBRC 15157 / NCIMB 11770), this protein is Large ribosomal subunit protein uL10.